The following is a 171-amino-acid chain: Shikimate kinase (171 aa).

14 to 19 is an ATP binding site; it reads GAGKST. Ser-18 is a binding site for Mg(2+). The substrate site is built by Asp-36, Arg-60, and Gly-82. Position 120 (Arg-120) interacts with ATP. Arg-139 is a substrate binding site. An ATP-binding site is contributed by Gln-156.

The protein belongs to the shikimate kinase family. In terms of assembly, monomer. The cofactor is Mg(2+).

It localises to the cytoplasm. The catalysed reaction is shikimate + ATP = 3-phosphoshikimate + ADP + H(+). Its pathway is metabolic intermediate biosynthesis; chorismate biosynthesis; chorismate from D-erythrose 4-phosphate and phosphoenolpyruvate: step 5/7. In terms of biological role, catalyzes the specific phosphorylation of the 3-hydroxyl group of shikimic acid using ATP as a cosubstrate. This Shewanella sp. (strain ANA-3) protein is Shikimate kinase.